Reading from the N-terminus, the 295-residue chain is Indole-3-glycerol phosphate synthase (295 aa).

Belongs to the TrpC family.

The enzyme catalyses 1-(2-carboxyphenylamino)-1-deoxy-D-ribulose 5-phosphate + H(+) = (1S,2R)-1-C-(indol-3-yl)glycerol 3-phosphate + CO2 + H2O. It participates in amino-acid biosynthesis; L-tryptophan biosynthesis; L-tryptophan from chorismate: step 4/5. The chain is Indole-3-glycerol phosphate synthase from Prochlorococcus marinus (strain MIT 9211).